The chain runs to 167 residues: Small ribosomal subunit protein uS3m (167 aa).

The transit peptide at methionine 1–alanine 35 directs the protein to the mitochondrion.

Belongs to the universal ribosomal protein uS3 family. Component of the mitochondrial ribosome small subunit (28S) which comprises a 12S rRNA and about 30 distinct proteins.

It is found in the mitochondrion. In Mus musculus (Mouse), this protein is Small ribosomal subunit protein uS3m (Mrps24).